A 230-amino-acid polypeptide reads, in one-letter code: Voltage-gated hydrogen channel 1 (230 aa).

The Cytoplasmic portion of the chain corresponds to 1–58 (MAGCLRHFTSVGDDTKKKAWKEEDVEVAHEEEPKNTPHPFIASYSFRGALKWLFSSHK). A helical membrane pass occupies residues 59–79 (FQIVIICLVILDALFVLVEVL). Topologically, residues 80–96 (LDLELLAEKVDHIIPEI) are extracellular. Residues 97–119 (FHYLSISVLSFFILEIAGKLYAF) traverse the membrane as a helical segment. Over 120–127 (RLEFFHHK) the chain is Cytoplasmic. The chain crosses the membrane as a helical span at residues 128–148 (FEVFDAAIVVISFIIDIVYIS). Over 149–155 (REDIFNA) the chain is Extracellular. The chain crosses the membrane as a helical span at residues 156-176 (VGLLILLRLWRVARIVNGIIV). The stretch at 177-226 (SVKTQAEDKIHRLKENQESLLEKVAHLEQQCAQQEQEIVRLQTLLQQHNV) forms a coiled coil. Topologically, residues 177 to 230 (SVKTQAEDKIHRLKENQESLLEKVAHLEQQCAQQEQEIVRLQTLLQQHNVFPAS) are cytoplasmic.

The protein belongs to the hydrogen channel family. In terms of assembly, homodimer.

Its subcellular location is the membrane. It is found in the cell membrane. Mediates the voltage-dependent proton permeability of excitable membranes. Forms a proton-selective channel through which protons may pass in accordance with their electrochemical gradient. In Xenopus tropicalis (Western clawed frog), this protein is Voltage-gated hydrogen channel 1 (hvcn1).